Consider the following 393-residue polypeptide: Formate-dependent phosphoribosylglycinamide formyltransferase (393 aa).

Residues 22–23 and glutamate 82 each bind N(1)-(5-phospho-beta-D-ribosyl)glycinamide; that span reads EL. ATP-binding positions include arginine 114, lysine 155, 160–165, 195–198, and glutamate 203; these read SSGKGQ and EGFI. The 190-residue stretch at 119–308 folds into the ATP-grasp domain; it reads RLAAEELGLP…EFALHARAIL (190 aa). Positions 267 and 279 each coordinate Mg(2+). N(1)-(5-phospho-beta-D-ribosyl)glycinamide contacts are provided by residues aspartate 286, lysine 356, and 363–364; that span reads RR.

It belongs to the PurK/PurT family. In terms of assembly, homodimer.

It catalyses the reaction N(1)-(5-phospho-beta-D-ribosyl)glycinamide + formate + ATP = N(2)-formyl-N(1)-(5-phospho-beta-D-ribosyl)glycinamide + ADP + phosphate + H(+). The protein operates within purine metabolism; IMP biosynthesis via de novo pathway; N(2)-formyl-N(1)-(5-phospho-D-ribosyl)glycinamide from N(1)-(5-phospho-D-ribosyl)glycinamide (formate route): step 1/1. Its function is as follows. Involved in the de novo purine biosynthesis. Catalyzes the transfer of formate to 5-phospho-ribosyl-glycinamide (GAR), producing 5-phospho-ribosyl-N-formylglycinamide (FGAR). Formate is provided by PurU via hydrolysis of 10-formyl-tetrahydrofolate. The protein is Formate-dependent phosphoribosylglycinamide formyltransferase of Stutzerimonas stutzeri (strain A1501) (Pseudomonas stutzeri).